A 158-amino-acid polypeptide reads, in one-letter code: SsrA-binding protein (158 aa).

Residues 130-158 are disordered; it reads KGKKNHDKREAQAKRDWSRQKQRLLKDHG. Over residues 136 to 158 the composition is skewed to basic and acidic residues; that stretch reads DKREAQAKRDWSRQKQRLLKDHG.

The protein belongs to the SmpB family.

It is found in the cytoplasm. Functionally, required for rescue of stalled ribosomes mediated by trans-translation. Binds to transfer-messenger RNA (tmRNA), required for stable association of tmRNA with ribosomes. tmRNA and SmpB together mimic tRNA shape, replacing the anticodon stem-loop with SmpB. tmRNA is encoded by the ssrA gene; the 2 termini fold to resemble tRNA(Ala) and it encodes a 'tag peptide', a short internal open reading frame. During trans-translation Ala-aminoacylated tmRNA acts like a tRNA, entering the A-site of stalled ribosomes, displacing the stalled mRNA. The ribosome then switches to translate the ORF on the tmRNA; the nascent peptide is terminated with the 'tag peptide' encoded by the tmRNA and targeted for degradation. The ribosome is freed to recommence translation, which seems to be the essential function of trans-translation. The chain is SsrA-binding protein from Ruegeria sp. (strain TM1040) (Silicibacter sp.).